We begin with the raw amino-acid sequence, 401 residues long: Dual-specificity RNA methyltransferase RlmN (401 aa).

Glutamate 114 acts as the Proton acceptor in catalysis. The 246-residue stretch at 120 to 365 folds into the Radical SAM core domain; the sequence is DKGRGTLCVS…TMVRRTRGDD (246 aa). Cysteines 127 and 370 form a disulfide. 3 residues coordinate [4Fe-4S] cluster: cysteine 134, cysteine 138, and cysteine 141. S-adenosyl-L-methionine contacts are provided by residues 187-188, serine 219, 241-243, and asparagine 327; these read GE and SLH. The S-methylcysteine intermediate role is filled by cysteine 370.

It belongs to the radical SAM superfamily. RlmN family. [4Fe-4S] cluster is required as a cofactor.

The protein resides in the cytoplasm. It carries out the reaction adenosine(2503) in 23S rRNA + 2 reduced [2Fe-2S]-[ferredoxin] + 2 S-adenosyl-L-methionine = 2-methyladenosine(2503) in 23S rRNA + 5'-deoxyadenosine + L-methionine + 2 oxidized [2Fe-2S]-[ferredoxin] + S-adenosyl-L-homocysteine. It catalyses the reaction adenosine(37) in tRNA + 2 reduced [2Fe-2S]-[ferredoxin] + 2 S-adenosyl-L-methionine = 2-methyladenosine(37) in tRNA + 5'-deoxyadenosine + L-methionine + 2 oxidized [2Fe-2S]-[ferredoxin] + S-adenosyl-L-homocysteine. Its function is as follows. Specifically methylates position 2 of adenine 2503 in 23S rRNA and position 2 of adenine 37 in tRNAs. m2A2503 modification seems to play a crucial role in the proofreading step occurring at the peptidyl transferase center and thus would serve to optimize ribosomal fidelity. This Xanthomonas axonopodis pv. citri (strain 306) protein is Dual-specificity RNA methyltransferase RlmN.